We begin with the raw amino-acid sequence, 358 residues long: Reverse gyrase subunit A (358 aa).

The region spanning 1–351 is the Topo IA-type catalytic domain; that stretch reads MNATLRIRNR…KLYLELERVV (351 aa). The active-site O-(5'-phospho-DNA)-tyrosine intermediate is the Tyr-78.

The protein belongs to the type IA topoisomerase family. Heterodimer of an RgyrA and RgyrB subunit. The topoisomerase domain is shared between the two subunits. Requires Mg(2+) as cofactor.

The protein resides in the cytoplasm. Functionally, modifies the topological state of DNA by introducing positive supercoils in an ATP-dependent process; dATP also allows positive supercoiling. Increases the linking number in steps of +1. Only this subunit binds DNA, in isolation it does not hydrolyze ATP. Hydrolyzes ATP only in the presence of DNA. Transiently cleaves a single DNA strand and remains covalently bound to the 5' DNA end probably through a tyrosine residue. It changes linking number in steps of one, and nicks DNA preferentially at 5'-CNNN | 3'-sites with a strong preference for 4 pyrimidine residues. There are about 1000 heterodimers per cell. May be involved in rewinding the DNA strands in the regions of the chromosome that have opened up to allow transcription or replication. Its function is as follows. Reverse gyrase activity is reconstituted after incubation at 80 degrees Celsius for 5 minutes, positive supercoiling requires ATP and Mg(2+). In the presence of ATP it binds and nicks substrate but does not make closed product. The polypeptide is Reverse gyrase subunit A (Methanopyrus kandleri (strain AV19 / DSM 6324 / JCM 9639 / NBRC 100938)).